A 147-amino-acid polypeptide reads, in one-letter code: RecQ-mediated genome instability protein 2 (147 aa).

The tract at residues 1 to 20 is disordered; it reads MAAAADSFSGGPAGVRLPRS. Residue A2 is modified to N-acetylalanine. S7 carries the post-translational modification Phosphoserine. Positions 44–114 form a DNA-binding region, OB; the sequence is SRAAAGRGPL…MGVVQACSPE (71 aa).

This sequence belongs to the RMI2 family. Component of the RMI complex, containing at least TOP3A, RMI1 and RMI2. The RMI complex interacts with BLM. In terms of processing, phosphorylated during mitosis.

The protein resides in the nucleus. Essential component of the RMI complex, a complex that plays an important role in the processing of homologous recombination intermediates. It is required to regulate sister chromatid segregation and to limit DNA crossover. Essential for the stability, localization, and function of BLM, TOP3A, and complexes containing BLM. In the RMI complex, it is required to target BLM to chromatin and stress-induced nuclear foci and mitotic phosphorylation of BLM. The chain is RecQ-mediated genome instability protein 2 (RMI2) from Homo sapiens (Human).